A 399-amino-acid polypeptide reads, in one-letter code: Argininosuccinate synthase (399 aa).

9–17 (AYSGGLDTS) serves as a coordination point for ATP. Tyrosine 88 is an L-citrulline binding site. Residue glycine 118 participates in ATP binding. Threonine 120, asparagine 124, and aspartate 125 together coordinate L-aspartate. Asparagine 124 contacts L-citrulline. Arginine 128, serine 176, glutamate 261, and tyrosine 273 together coordinate L-citrulline.

The protein belongs to the argininosuccinate synthase family. Type 1 subfamily. In terms of assembly, homotetramer.

The protein localises to the cytoplasm. The catalysed reaction is L-citrulline + L-aspartate + ATP = 2-(N(omega)-L-arginino)succinate + AMP + diphosphate + H(+). It functions in the pathway amino-acid biosynthesis; L-arginine biosynthesis; L-arginine from L-ornithine and carbamoyl phosphate: step 2/3. This is Argininosuccinate synthase from Mycobacterium leprae (strain TN).